The sequence spans 408 residues: UDP-N-acetylglucosamine--N-acetylmuramyl-(pentapeptide) pyrophosphoryl-undecaprenol N-acetylglucosamine transferase (408 aa).

Residues 1–20 (MNDTVKKPTGGRGDDPLPAG) form a disordered region. UDP-N-acetyl-alpha-D-glucosamine contacts are provided by residues 41–43 (TAG), Asn-160, Arg-197, Ser-231, and Gln-327.

It belongs to the glycosyltransferase 28 family. MurG subfamily.

It localises to the cell membrane. The catalysed reaction is di-trans,octa-cis-undecaprenyl diphospho-N-acetyl-alpha-D-muramoyl-L-alanyl-D-glutamyl-meso-2,6-diaminopimeloyl-D-alanyl-D-alanine + UDP-N-acetyl-alpha-D-glucosamine = di-trans,octa-cis-undecaprenyl diphospho-[N-acetyl-alpha-D-glucosaminyl-(1-&gt;4)]-N-acetyl-alpha-D-muramoyl-L-alanyl-D-glutamyl-meso-2,6-diaminopimeloyl-D-alanyl-D-alanine + UDP + H(+). The protein operates within cell wall biogenesis; peptidoglycan biosynthesis. In terms of biological role, cell wall formation. Catalyzes the transfer of a GlcNAc subunit on undecaprenyl-pyrophosphoryl-MurNAc-pentapeptide (lipid intermediate I) to form undecaprenyl-pyrophosphoryl-MurNAc-(pentapeptide)GlcNAc (lipid intermediate II). The chain is UDP-N-acetylglucosamine--N-acetylmuramyl-(pentapeptide) pyrophosphoryl-undecaprenol N-acetylglucosamine transferase from Mycolicibacterium paratuberculosis (strain ATCC BAA-968 / K-10) (Mycobacterium paratuberculosis).